A 288-amino-acid chain; its full sequence is ATP synthase gamma chain (288 aa).

Belongs to the ATPase gamma chain family. As to quaternary structure, F-type ATPases have 2 components, CF(1) - the catalytic core - and CF(0) - the membrane proton channel. CF(1) has five subunits: alpha(3), beta(3), gamma(1), delta(1), epsilon(1). CF(0) has three main subunits: a, b and c.

It localises to the cell inner membrane. Its function is as follows. Produces ATP from ADP in the presence of a proton gradient across the membrane. The gamma chain is believed to be important in regulating ATPase activity and the flow of protons through the CF(0) complex. This is ATP synthase gamma chain from Laribacter hongkongensis (strain HLHK9).